We begin with the raw amino-acid sequence, 434 residues long: Putative DD-carboxypeptidase TP_0574 (434 aa).

Residues 1–19 (MKVKYALLSAGALQLLVVG) form the signal peptide. Cysteine 20 is lipidated: N-palmitoyl cysteine. Cysteine 20 carries the S-diacylglycerol cysteine lipid modification.

In terms of assembly, probably a monomer; a non-lipidated construct (residues 22-434) is monomeric in solution but crystallizes as a homodimer. Zn(2+) serves as cofactor. In terms of processing, the N-terminus is blocked. Present as a doublet of low abundance 48 kDa and high abundance 47 kDa proteins. The longer form is probably due to readthrough of the stop codon; the extra amino acids at the C-terminus would be X-Lys-Arg-Gly-Val-Leu-Ser-Arg-Val-Ser, a peptide antibody against this sequence detects only the 48 kDa form.

The protein resides in the cell inner membrane. Functionally, a possible D,D-carboxypeptidase, that releases amino acids sequentially from a proteins C-terminus. Has zinc-dependent carboxypeptidase activity on synthetic depsipeptide substrates. May serve to decrease cross-linking of peptidoglycan, promoting the highly sinusous motility of this spirochaete. Overexpression of the whole protein in E.coli leads to aberrant cell morphology and extrusion of the cytoplasm, while overexpression of a construct with the first 62 resides of the protein fused to PhoA does have this effect, suggesting the whole protein, not the lipoprotein moiety, is toxic. Binds penicillin. Penicillin binding is covalent, does not require lipidation, and is zinc-dependent. While this protein has beta-lactamase activity in vitro, that is probably not its role in vivo, as T.pallidum is very sensitive to penicillin antibiotics. In terms of biological role, a pathogen-specific membrane antigen. Most abundant of the membrane lipoproteins, only found in pathogenic treponemes, suggesting that it is an important structural moiety in the cell envelope of virulent treponemal subspecies. A lipopeptide corresponding to the first 6 mature residues induces host (human and mouse) cytokine release by monocyte cell lines via TLR2 and CD14; nonlipidated protein does not stimulate host cells. Stimulates host (human) dendritic cell maturation to become MHC class II-positive antigen presenting cells via TLR2, which depends on lipidation; nonlipidated protein does not stimulate maturation. The sequence is that of Putative DD-carboxypeptidase TP_0574 from Treponema pallidum (strain Nichols).